The primary structure comprises 88 residues: Small ribosomal subunit protein uS15 (88 aa).

It belongs to the universal ribosomal protein uS15 family. As to quaternary structure, part of the 30S ribosomal subunit. Forms a bridge to the 50S subunit in the 70S ribosome, contacting the 23S rRNA.

Functionally, one of the primary rRNA binding proteins, it binds directly to 16S rRNA where it helps nucleate assembly of the platform of the 30S subunit by binding and bridging several RNA helices of the 16S rRNA. Its function is as follows. Forms an intersubunit bridge (bridge B4) with the 23S rRNA of the 50S subunit in the ribosome. This Pelobacter propionicus (strain DSM 2379 / NBRC 103807 / OttBd1) protein is Small ribosomal subunit protein uS15.